The chain runs to 1019 residues: Clotting factor C (1019 aa).

An N-terminal signal peptide occupies residues 1-25 (MVLASFLVSGLVLGILAQQMRPVQS). In terms of domain architecture, EGF-like spans 102-137 (YGTWCSGECQCKNGGICDQRTGACTCRDRYEGAHCE). Intrachain disulfides connect Cys-110–Cys-118, Cys-112–Cys-125, Cys-127–Cys-136, Cys-142–Cys-182, Cys-168–Cys-195, Cys-199–Cys-241, Cys-227–Cys-254, Cys-260–Cys-308, Cys-294–Cys-321, Cys-331–Cys-350, Cys-354–Cys-374, Cys-464–Cys-564, Cys-538–Cys-556, Cys-576–Cys-621, Cys-607–Cys-634, and Cys-720–Cys-748. 3 Sushi domains span residues 140-197 (KGCP…KCIR), 198-256 (ECAK…QCKK), and 258-323 (VFCP…SCVK). In terms of domain architecture, LCCL spans 325–421 (ADREVDCDSK…EELKSLARSF (97 aa)). Residues 436-568 (CPDGWFEVEE…PSSFACMMDL (133 aa)) enclose the C-type lectin domain. Residues Asn-523 and Asn-534 are each glycosylated (N-linked (GlcNAc...) asparagine). Sushi domains are found at residues 574-636 (AKCD…RCIK) and 689-750 (PRSS…SCIP). Asn-624, Asn-740, and Asn-767 each carry an N-linked (GlcNAc...) asparagine glycan. The 257-residue stretch at 763–1019 (IWNGNSTEIG…VFLSWIRQFI (257 aa)) folds into the Peptidase S1 domain. The cysteines at positions 794 and 810 are disulfide-linked. Active-site charge relay system residues include His-809 and Asp-865. An N-linked (GlcNAc...) asparagine glycan is attached at Asn-912. Cysteines 932 and 951 form a disulfide. Residue Asp-960 coordinates substrate. Cysteines 962 and 996 form a disulfide. Catalysis depends on Ser-966, which acts as the Charge relay system.

It belongs to the peptidase S1 family. As to quaternary structure, heterodimer of a light chain and a heavy chain linked by a disulfide bond. Forms a covalent heterodimer with intracellular coagulation inhibitor 1/LICI-1. Forms a covalent heterodimer with intracellular coagulation inhibitor 2/LICI-2. In terms of processing, N-glycosylated. Lipopolysaccharide (LPS) activates clotting factor C by inducing the proteolytic cleavage of the clotting factor C light chain into clotting factor C chains A and B. Clotting factor C chains heavy, A and B remain associated via interchain disulfide bonds. Expressed in hemocytes (at protein level).

It is found in the secreted. The enzyme catalyses Selective cleavage of 103-Arg-|-Ser-104 and 124-Ile-|-Ile-125 bonds in Limulus clotting factor B to form activated factor B. Cleavage of -Pro-Arg-|-Xaa- bonds in synthetic substrates.. Its activity is regulated as follows. Activated by Gram-negative bacterial lipopolysaccharides. Inhibited by intracellular coagulation inhibitor 1/LICI-1 and to a lesser extent by intracellular coagulation inhibitors 2/LICI-2 and 3/LICI-3. Inhibited by the small molecule diisopropyl fluorophosphate (DFP). This enzyme is closely associated with an endotoxin-sensitive hemolymph coagulation system which may play important roles in both hemostasis and host defense mechanisms. Its active form catalyzes the activation of clotting factor B. This chain is Clotting factor C, found in Tachypleus tridentatus (Japanese horseshoe crab).